Here is a 256-residue protein sequence, read N- to C-terminus: Small ribosomal subunit protein eS1A (256 aa).

Residue Ala2 is modified to N-acetylalanine; partial.

This sequence belongs to the eukaryotic ribosomal protein eS1 family. As to quaternary structure, component of the small ribosomal subunit. Mature ribosomes consist of a small (40S) and a large (60S) subunit. The 40S subunit contains about 33 different proteins and 1 molecule of RNA (18S). The 60S subunit contains about 49 different proteins and 3 molecules of RNA (25S, 5.8S and 5S).

The protein resides in the cytoplasm. The chain is Small ribosomal subunit protein eS1A from Debaryomyces hansenii (strain ATCC 36239 / CBS 767 / BCRC 21394 / JCM 1990 / NBRC 0083 / IGC 2968) (Yeast).